Here is a 296-residue protein sequence, read N- to C-terminus: Transposase for insertion sequence element IST2 (296 aa).

Belongs to the transposase mutator family.

Functionally, required for the transposition of the insertion element. The sequence is that of Transposase for insertion sequence element IST2 from Acidithiobacillus ferrooxidans (Thiobacillus ferrooxidans).